The chain runs to 169 residues: Secreted LysM effector Blys5 (169 aa).

Residues 1 to 19 (MKLSVISAVFVSLAAAAAA) form the signal peptide. LysM domains are found at residues 47–94 (TYYQ…YYCV) and 121–167 (QWYK…NVCV).

Belongs to the secreted LysM effector family.

In terms of biological role, secreted effector that enables the plant pathogenic fungus to manipulate host defenses for successful infection. Required for the full virulence to infect insect hosts. Protects fungal hyphae against the hydrolytic activity of chitinase and plays an important role in evasion of insect immunities. Binds chitin and can additionally bind chitosan and cellulose. Coats and protects the cell walls of insect pathogens from host cell recognition and additionally shields fungal cells from the hydrolysis of insect chitinases. This chain is Secreted LysM effector Blys5, found in Beauveria bassiana (strain ARSEF 2860) (White muscardine disease fungus).